Consider the following 491-residue polypeptide: Aspartyl/glutamyl-tRNA(Asn/Gln) amidotransferase subunit B (491 aa).

This sequence belongs to the GatB/GatE family. GatB subfamily. In terms of assembly, heterotrimer of A, B and C subunits.

It catalyses the reaction L-glutamyl-tRNA(Gln) + L-glutamine + ATP + H2O = L-glutaminyl-tRNA(Gln) + L-glutamate + ADP + phosphate + H(+). The enzyme catalyses L-aspartyl-tRNA(Asn) + L-glutamine + ATP + H2O = L-asparaginyl-tRNA(Asn) + L-glutamate + ADP + phosphate + 2 H(+). Functionally, allows the formation of correctly charged Asn-tRNA(Asn) or Gln-tRNA(Gln) through the transamidation of misacylated Asp-tRNA(Asn) or Glu-tRNA(Gln) in organisms which lack either or both of asparaginyl-tRNA or glutaminyl-tRNA synthetases. The reaction takes place in the presence of glutamine and ATP through an activated phospho-Asp-tRNA(Asn) or phospho-Glu-tRNA(Gln). The protein is Aspartyl/glutamyl-tRNA(Asn/Gln) amidotransferase subunit B of Paraburkholderia xenovorans (strain LB400).